The chain runs to 355 residues: D-alanine--D-alanine ligase (355 aa).

Residues 143–350 form the ATP-grasp domain; the sequence is KIIFSNLKIP…IEQLVAKLVD (208 aa). 178-233 contributes to the ATP binding site; it reads LKKLNFPVFVKPSNSGSSLGISKVINKSEIIPALEKARGIDPSILIEEGLEVREIE. Residues D303, E317, and N319 each coordinate Mg(2+).

It belongs to the D-alanine--D-alanine ligase family. Mg(2+) is required as a cofactor. Mn(2+) serves as cofactor.

It localises to the cytoplasm. It carries out the reaction 2 D-alanine + ATP = D-alanyl-D-alanine + ADP + phosphate + H(+). It participates in cell wall biogenesis; peptidoglycan biosynthesis. Its function is as follows. Cell wall formation. In Prochlorococcus marinus (strain AS9601), this protein is D-alanine--D-alanine ligase.